The following is a 429-amino-acid chain: Enolase (429 aa).

Gln-164 is a (2R)-2-phosphoglycerate binding site. The Proton donor role is filled by Glu-206. Asp-243, Glu-286, and Asp-313 together coordinate Mg(2+). Positions 338, 367, 368, and 389 each coordinate (2R)-2-phosphoglycerate. Lys-338 serves as the catalytic Proton acceptor.

The protein belongs to the enolase family. Homooctamer. Forms a ring-shaped particle. It depends on Mg(2+) as a cofactor.

Its subcellular location is the cytoplasm. It localises to the secreted. The protein localises to the cell surface. The enzyme catalyses (2R)-2-phosphoglycerate = phosphoenolpyruvate + H2O. It functions in the pathway carbohydrate degradation; glycolysis; pyruvate from D-glyceraldehyde 3-phosphate: step 4/5. Inhibited by fluoride and phosphate. In terms of biological role, catalyzes the reversible conversion of 2-phosphoglycerate (2-PG) into phosphoenolpyruvate (PEP). It is essential for the degradation of carbohydrates via glycolysis. The sequence is that of Enolase from Thermotoga maritima (strain ATCC 43589 / DSM 3109 / JCM 10099 / NBRC 100826 / MSB8).